Here is a 676-residue protein sequence, read N- to C-terminus: Hypermethylated in cancer 1 protein (676 aa).

A disordered region spans residues 1–27 (APGARPAASRERGHKSREERCGERGAA). A compositionally biased stretch (basic and acidic residues) spans 8 to 23 (ASRERGHKSREERCGE). In terms of domain architecture, BTB spans 63–126 (CDVIIVVQNA…IYTGRLGECE (64 aa)). The interval 241–245 (GLDLS) is binding to CtBP. 2 disordered regions span residues 264-326 (PAEP…LPRG) and 342-405 (GPYL…DRYC). 2 stretches are compositionally biased toward basic and acidic residues: residues 266–278 (EPRE…RHDS) and 351–361 (EKELEREEKAE). A compositionally biased stretch (low complexity) spans 384–398 (STSEETGSSEGPSPG). 5 consecutive C2H2-type zinc fingers follow at residues 420–447 (YVCI…EEEL), 474–501 (YRCS…LTRP), 502–529 (YPCT…GLKP), 530–557 (FACD…GEKP), and 558–585 (YECQ…AGPD).

The protein belongs to the krueppel C2H2-type zinc-finger protein family. Hic subfamily. Interacts with CtBP. Isoform 1 is highly expressed in kidney and lung. Expression of isoform 2 is higher in the lens, retina and stomach, and extremely low in heart, muscle, kidney and lung. Isoform 3 is weakly expressed in heart, kidney and lens.

The protein localises to the nucleus. Its function is as follows. Binds specifically to the gamma F-1-binding motif of the gamma F-crystallin promoter. May have a regulatory role in sclerotome specification and/or differentiation. Isoform 2 functions as a transcriptional repressor in lens cells. The sequence is that of Hypermethylated in cancer 1 protein (HIC1) from Gallus gallus (Chicken).